The primary structure comprises 147 residues: Cyanate hydratase (147 aa).

Catalysis depends on residues arginine 88, glutamate 91, and serine 114.

This sequence belongs to the cyanase family.

The enzyme catalyses cyanate + hydrogencarbonate + 3 H(+) = NH4(+) + 2 CO2. Catalyzes the reaction of cyanate with bicarbonate to produce ammonia and carbon dioxide. The sequence is that of Cyanate hydratase from Variovorax paradoxus (strain S110).